The following is a 20-amino-acid chain: Phospholipase A2 II-5b (20 aa).

The protein belongs to the phospholipase A2 family. Group I subfamily. Requires Ca(2+) as cofactor. Expressed by the venom gland.

The protein localises to the secreted. The enzyme catalyses a 1,2-diacyl-sn-glycero-3-phosphocholine + H2O = a 1-acyl-sn-glycero-3-phosphocholine + a fatty acid + H(+). In terms of biological role, snake venom phospholipase A2 (PLA2) that exhibits weak enzymatic activity. PLA2 catalyzes the calcium-dependent hydrolysis of the 2-acyl groups in 3-sn-phosphoglycerides. This is Phospholipase A2 II-5b from Notechis scutatus scutatus (Mainland tiger snake).